The sequence spans 235 residues: MTDGNQKPDGNSGEQVTVTDKRRIDPETGEVRHVPPGDMPGGTAAADAAHTEDKVAELTADLQRVQADFANYRKRALRDQQAAADRAKASVVSQLLGVLDDLERARKHGDLESGPLKSVADKLDSALTGLGLVAFGAEGEDFDPVLHEAVQHEGDGGQGSKPVIGTVMRQGYQLGEQVLRHALVGVVDTVVVDAAELESVDDGTAVADTAENDQADQGNSADTSGEQAESEPSGS.

The segment covering 1 to 18 (MTDGNQKPDGNSGEQVTV) has biased composition (polar residues). 2 disordered regions span residues 1–50 (MTDG…DAAH) and 198–235 (ESVD…PSGS). Positions 19-35 (TDKRRIDPETGEVRHVP) are enriched in basic and acidic residues. A compositionally biased stretch (polar residues) spans 215 to 235 (ADQGNSADTSGEQAESEPSGS).

The protein belongs to the GrpE family. As to quaternary structure, homodimer.

It localises to the cytoplasm. Its function is as follows. Participates actively in the response to hyperosmotic and heat shock by preventing the aggregation of stress-denatured proteins, in association with DnaK and GrpE. It is the nucleotide exchange factor for DnaK and may function as a thermosensor. Unfolded proteins bind initially to DnaJ; upon interaction with the DnaJ-bound protein, DnaK hydrolyzes its bound ATP, resulting in the formation of a stable complex. GrpE releases ADP from DnaK; ATP binding to DnaK triggers the release of the substrate protein, thus completing the reaction cycle. Several rounds of ATP-dependent interactions between DnaJ, DnaK and GrpE are required for fully efficient folding. The sequence is that of Protein GrpE from Mycobacterium tuberculosis (strain ATCC 25177 / H37Ra).